A 633-amino-acid polypeptide reads, in one-letter code: MERGSCSAPGDPGHLGLFLQRLRQVFDACDGDADGFIKVEHFVALGLQFAQGDEVKKLAKRLDPNAQGRIGFKDFCHGVLAMKGCDKFVKGILGVTGTAPQHYEAPYTPYYYQSPETIEGPFLDTESSYSDSEFFAYEDGLTLSHRDAQHESDLDSAMYSTPSSEASDEGRNEDKAGGLGSLYLPGEQNLLKPSAGSGFSTHSTASLISNEEQFEDYGEGEDIDYSPGSPCPDDESRTNALSDLGSSVPSSAGQTPRKARLMYNTDLLDIYCTQCSKKITLLNDLEARLKNLKANSPNRKISSTAFGRQLLHNSNLSSSNGSTEDLFRDSIDSCENDITEKVSFLEKKVTELENDNLTNGDVKNKLKHENIHLVHRVHELEEFLRDQETKSEQVLDEESKRHRETYSKLAREKGTEIVLLSARVQELQEENEDLLTSLTRLKSHTVRIDEERQRVWDKLEDTSLRLKDETDLYKRLMDKLRQNRLHFQKEREATQELIEDLRRELDHLQIYKLECERSGRGPPSGLTELNVKSREVELEQEIRRLKQDNQKLRDQNDDLNGQILSLSLYEAKSLFSTQTKAQSLAAEIDSASKDELMEALKEQEEINYRLRQYMDKIILAILDHNPSILEIKN.

EF-hand domains are found at residues 17 to 52 (LFLQ…FAQG) and 50 to 85 (AQGD…MKGC). Residues aspartate 30, aspartate 32, aspartate 34, aspartate 63, asparagine 65, arginine 69, and aspartate 74 each contribute to the Ca(2+) site. Disordered regions lie at residues 152–182 (SDLD…LGSL) and 218–257 (GEGE…QTPR). The span at 238 to 254 (TNALSDLGSSVPSSAGQ) shows a compositional bias: polar residues. The stretch at 410–613 (AREKGTEIVL…EEINYRLRQY (204 aa)) forms a coiled coil. An FIP-RBD domain is found at 570–632 (EAKSLFSTQT…DHNPSILEIK (63 aa)).

As to quaternary structure, homodimer. Forms a complex with Rab11 (rab11a or rab11b) and arf6.

It is found in the recycling endosome membrane. The protein localises to the cleavage furrow. The protein resides in the midbody. Its subcellular location is the cytoplasmic vesicle. Acts as a regulator of endocytic traffic by participating in membrane delivery. Required for the abscission step in cytokinesis, possibly by acting as an 'address tag' delivering recycling endosome membranes to the cleavage furrow during late cytokinesis. In Xenopus tropicalis (Western clawed frog), this protein is Rab11 family-interacting protein 4 (rab11fip4).